Consider the following 638-residue polypeptide: LIM domain kinase 2 (638 aa).

2 LIM zinc-binding domains span residues 12 to 63 (CRGC…CHKD) and 72 to 124 (CHGC…CGKC). In terms of domain architecture, PDZ spans 152-239 (LISMPATTEC…TLQLLIEHDP (88 aa)). The residue at position 210 (T210) is a Phosphothreonine. The tract at residues 255–304 (PHMQSTGHTLMLSTLDTKENQEGTLRRRSLRRSNSISKSPGPSSPKEPLL) is disordered. Over residues 257 to 269 (MQSTGHTLMLSTL) the composition is skewed to polar residues. A compositionally biased stretch (basic and acidic residues) spans 270–279 (DTKENQEGTL). Positions 286–304 (RSNSISKSPGPSSPKEPLL) are enriched in low complexity. 2 positions are modified to phosphoserine: S293 and S298. Residues 331 to 608 (LIHGEVLGKG…DSFEALSLFL (278 aa)) form the Protein kinase domain. ATP-binding positions include 337–345 (LGKGFFGQA) and K360. The active site involves D451. Residue T505 is modified to Phosphothreonine; by ROCK1 and CDC42BP.

This sequence belongs to the protein kinase superfamily. TKL Ser/Thr protein kinase family. In terms of assembly, binds ROCK1 and MARF1. Interacts with NISCH. Post-translationally, phosphorylated on serine and/or threonine residues by ROCK1. In terms of tissue distribution, specifically expressed in the testes.

Its subcellular location is the cytoplasm. The protein localises to the cytoskeleton. The protein resides in the spindle. It is found in the microtubule organizing center. It localises to the centrosome. Its subcellular location is the nucleus. The protein localises to the perinuclear region. It carries out the reaction L-seryl-[protein] + ATP = O-phospho-L-seryl-[protein] + ADP + H(+). The catalysed reaction is L-threonyl-[protein] + ATP = O-phospho-L-threonyl-[protein] + ADP + H(+). In terms of biological role, serine/threonine-protein kinase that plays an essential role in the regulation of actin filament dynamics. Acts downstream of several Rho family GTPase signal transduction pathways. Involved in astral microtubule organization and mitotic spindle orientation during early stages of mitosis by mediating phosphorylation of TPPP. Displays serine/threonine-specific phosphorylation of myelin basic protein and histone (MBP) in vitro. Suppresses ciliogenesis via multiple pathways; phosphorylation of CFL1, suppression of directional trafficking of ciliary vesicles to the ciliary base, and by facilitating YAP1 nuclear localization where it acts as a transcriptional corepressor of the TEAD4 target genes AURKA and PLK1. This chain is LIM domain kinase 2 (Limk2), found in Mus musculus (Mouse).